The following is a 113-amino-acid chain: Seminal vesicle secretory protein 4 (113 aa).

Residues 1-21 (MNSTSLFLFSLLLLLVTGAIG) form the signal peptide. The disordered stretch occupies residues 31 to 113 (SEETVRESFS…KSRFSQDALE (83 aa)). Low complexity-rich tracts occupy residues 38–50 (SFSM…MSRS) and 83–98 (IISS…GESS).

It belongs to the SVP2/SVP5/SVP6 family. Testis.

Its subcellular location is the secreted. It localises to the extracellular space. This chain is Seminal vesicle secretory protein 4 (Svs4), found in Mus musculus (Mouse).